The sequence spans 419 residues: Histidine--tRNA ligase (419 aa).

The protein belongs to the class-II aminoacyl-tRNA synthetase family. In terms of assembly, homodimer.

It localises to the cytoplasm. It catalyses the reaction tRNA(His) + L-histidine + ATP = L-histidyl-tRNA(His) + AMP + diphosphate + H(+). This chain is Histidine--tRNA ligase, found in Desulfatibacillum aliphaticivorans.